The sequence spans 37 residues: Large ribosomal subunit protein bL36c (37 aa).

This sequence belongs to the bacterial ribosomal protein bL36 family.

It is found in the plastid. In Cuscuta exaltata (Tall dodder), this protein is Large ribosomal subunit protein bL36c.